The primary structure comprises 138 residues: 16 kDa phloem protein 2 (138 aa).

The region spanning 1–108 (MGMGMMEVHL…LAEGVRKGWS (108 aa)) is the C2 domain. Ca(2+)-binding residues include aspartate 20, aspartate 27, aspartate 78, aspartate 80, and aspartate 86.

Requires Ca(2+) as cofactor. In terms of tissue distribution, sieve elements of leaves, stems, roots and flowers.

Functionally, binds to both sense and antisense RNA. Interacts with mesophyll plasmodesmata to mediate its own cell-to-cell transport and potentiate RNA trafficking. The protein is 16 kDa phloem protein 2 (PP16-2) of Cucurbita maxima (Pumpkin).